An 86-amino-acid chain; its full sequence is Large ribosomal subunit protein bL27 (86 aa).

The interval 1–22 (MATKKAGGSSRNGRDSAGRRLG) is disordered.

The protein belongs to the bacterial ribosomal protein bL27 family.

This is Large ribosomal subunit protein bL27 from Rickettsia bellii (strain RML369-C).